The following is a 307-amino-acid chain: Serine/threonine-protein phosphatase PP2A-3 catalytic subunit (307 aa).

Positions 55, 57, 83, and 115 each coordinate Mn(2+). Catalysis depends on His-116, which acts as the Proton donor. 2 residues coordinate Mn(2+): His-165 and His-239.

It belongs to the PPP phosphatase family. PP-2A subfamily. It depends on Mn(2+) as a cofactor.

It is found in the cytoplasm. It carries out the reaction O-phospho-L-seryl-[protein] + H2O = L-seryl-[protein] + phosphate. The enzyme catalyses O-phospho-L-threonyl-[protein] + H2O = L-threonyl-[protein] + phosphate. This chain is Serine/threonine-protein phosphatase PP2A-3 catalytic subunit (PP2A3), found in Oryza sativa subsp. indica (Rice).